The following is a 391-amino-acid chain: Ferrochelatase (391 aa).

Positions 196 and 281 each coordinate Fe cation.

The protein belongs to the ferrochelatase family.

The protein resides in the cytoplasm. The enzyme catalyses heme b + 2 H(+) = protoporphyrin IX + Fe(2+). The protein operates within porphyrin-containing compound metabolism; protoheme biosynthesis; protoheme from protoporphyrin-IX: step 1/1. Its function is as follows. Catalyzes the ferrous insertion into protoporphyrin IX. The sequence is that of Ferrochelatase from Prochlorococcus marinus (strain MIT 9312).